The sequence spans 554 residues: Asparagine synthetase B [glutamine-hydrolyzing] (554 aa).

Cysteine 2 (for GATase activity) is an active-site residue. Residues 2–186 form the Glutamine amidotransferase type-2 domain; sequence CSIFGVFDIK…AGSYLWSQDG (185 aa). L-glutamine contacts are provided by residues 50 to 54, 75 to 77, and aspartate 99; these read RLSIV and NGE. ATP contacts are provided by residues leucine 233, valine 273, and 347 to 348; that span reads SG.

Belongs to the asparagine synthetase family. As to quaternary structure, homodimer.

It carries out the reaction L-aspartate + L-glutamine + ATP + H2O = L-asparagine + L-glutamate + AMP + diphosphate + H(+). It participates in amino-acid biosynthesis; L-asparagine biosynthesis; L-asparagine from L-aspartate (L-Gln route): step 1/1. With respect to regulation, glutamine-dependent asparagine synthesis activity can be inhibited by aspartic acid analogs (such as a sulfinate derivative and (2S,3R)-2-amino-3-methylsuccinate) in vitro; the inhibition is competitive with respect to aspartate. Functionally, catalyzes the ATP-dependent conversion of aspartate into asparagine, using glutamine as a source of nitrogen. Can also use ammonia as the nitrogen source in vitro, albeit with lower efficiency. As nucleotide substrates, ATP and dATP are utilized at a similar rate in both the glutamine- and ammonia-dependent reactions, whereas GTP utilization is only 15% that of ATP, and CTP, UTP, ITP and XTP are very poor or not substrates. Also exhibits glutaminase activity. The sequence is that of Asparagine synthetase B [glutamine-hydrolyzing] (asnB) from Escherichia coli (strain K12).